A 288-amino-acid chain; its full sequence is Alpha/beta hydrolase domain-containing protein 17B (288 aa).

Residues Ser170, Asp235, and His264 each act as charge relay system in the active site.

The protein belongs to the AB hydrolase superfamily. ABHD17 family. Palmitoylated on cysteine residues located in a cysteine cluster at the N-terminus which promotes membrane localization.

The protein localises to the cell membrane. It localises to the recycling endosome membrane. Its subcellular location is the cell projection. It is found in the dendritic spine. The protein resides in the postsynaptic density membrane. It carries out the reaction S-hexadecanoyl-L-cysteinyl-[protein] + H2O = L-cysteinyl-[protein] + hexadecanoate + H(+). Hydrolyzes fatty acids from S-acylated cysteine residues in proteins. Has depalmitoylating activity towards nras. The chain is Alpha/beta hydrolase domain-containing protein 17B from Xenopus laevis (African clawed frog).